The primary structure comprises 749 residues: Transcription factor RFX3 (749 aa).

Positions 183 to 258 form a DNA-binding region, RFX-type winged-helix; the sequence is HLQWLLDNYE…YHYYGIRVKP (76 aa). The interval 663-699 is disordered; sequence VSPGNLDKDEGSEVESETDEDLDDSSEPRAKREKTEL. Acidic residues predominate over residues 674-687; the sequence is SEVESETDEDLDDS. Positions 688-698 are enriched in basic and acidic residues; the sequence is SEPRAKREKTE.

It belongs to the RFX family. Heterodimer; heterodimerizes with RFX1 and RFX2, and RFX6. As to expression, expressed in ciliated cells of the node and in the ciliated ependymal cells of the subcommissural organ (SCO), choroid plexuses (CP) and ventricular walls during embryonic and postnatal development. Expressed in developing and mature pancreatic endocrine cells during embryogenesis and in adults (at protein level).

The protein localises to the nucleus. In terms of biological role, transcription factor required for ciliogenesis and islet cell differentiation during endocrine pancreas development. Essential for the differentiation of nodal monocilia and left-right asymmetry specification during embryogenesis. Required for the biogenesis of motile cilia by governing growth and beating efficiency of motile cells. Also required for ciliated ependymal cell differentiation. Together with RFX6, participates in the differentiation of 4 of the 5 islet cell types during endocrine pancreas development, with the exception of pancreatic PP (polypeptide-producing) cells. Regulates transcription by forming a heterodimer with another RFX protein and binding to the X-box in the promoter of target genes. Regulates the expression of genes involved in ciliary assembly (DYNC2LI1, FOXJ1 and BBS4) and genes involved in ciliary motility (DNAH11, DNAH9 and DNAH5). Represses transcription of MAP1A in non-neuronal cells but not in neuronal cells. This Mus musculus (Mouse) protein is Transcription factor RFX3 (Rfx3).